The chain runs to 307 residues: Aspartate carbamoyltransferase catalytic subunit (307 aa).

Residues Arg-58 and Thr-59 each coordinate carbamoyl phosphate. Residue Lys-86 coordinates L-aspartate. Residues Arg-108, His-136, and Gln-139 each contribute to the carbamoyl phosphate site. Residues Arg-169 and Arg-223 each coordinate L-aspartate. Gly-264 and Pro-265 together coordinate carbamoyl phosphate.

The protein belongs to the aspartate/ornithine carbamoyltransferase superfamily. ATCase family. As to quaternary structure, heterododecamer (2C3:3R2) of six catalytic PyrB chains organized as two trimers (C3), and six regulatory PyrI chains organized as three dimers (R2).

The enzyme catalyses carbamoyl phosphate + L-aspartate = N-carbamoyl-L-aspartate + phosphate + H(+). It functions in the pathway pyrimidine metabolism; UMP biosynthesis via de novo pathway; (S)-dihydroorotate from bicarbonate: step 2/3. Functionally, catalyzes the condensation of carbamoyl phosphate and aspartate to form carbamoyl aspartate and inorganic phosphate, the committed step in the de novo pyrimidine nucleotide biosynthesis pathway. The protein is Aspartate carbamoyltransferase catalytic subunit of Syntrophus aciditrophicus (strain SB).